Here is a 116-residue protein sequence, read N- to C-terminus: RutC family protein HI_1627 (116 aa).

Belongs to the RutC family.

The protein is RutC family protein HI_1627 of Haemophilus influenzae (strain ATCC 51907 / DSM 11121 / KW20 / Rd).